The chain runs to 198 residues: 8-oxoguanine DNA glycosylase/AP lyase (198 aa).

Catalysis depends on residues Lys-122 and Asp-140.

Belongs to the type-2 OGG1 family. Monomer.

It catalyses the reaction 2'-deoxyribonucleotide-(2'-deoxyribose 5'-phosphate)-2'-deoxyribonucleotide-DNA = a 3'-end 2'-deoxyribonucleotide-(2,3-dehydro-2,3-deoxyribose 5'-phosphate)-DNA + a 5'-end 5'-phospho-2'-deoxyribonucleoside-DNA + H(+). Catalyzes the excision of an oxidatively damaged form of guanine (7,8-dihydro-8-oxoguanine = 8-oxoG) from DNA. Also cleaves the DNA backbone at apurinic/apyrimidinic sites (AP sites). Efficiently cleaves oligomers containing 8-oxoG:C and 8-oxoG:G base pairs, and is less effective on oligomers containing 8-oxoG:T and 8-oxoG:A mispairs. In Archaeoglobus fulgidus (strain ATCC 49558 / DSM 4304 / JCM 9628 / NBRC 100126 / VC-16), this protein is 8-oxoguanine DNA glycosylase/AP lyase.